The primary structure comprises 899 residues: Alanine--tRNA ligase (899 aa).

4 residues coordinate Zn(2+): His595, His599, Cys703, and His707.

The protein belongs to the class-II aminoacyl-tRNA synthetase family. Zn(2+) serves as cofactor.

The protein resides in the cytoplasm. It catalyses the reaction tRNA(Ala) + L-alanine + ATP = L-alanyl-tRNA(Ala) + AMP + diphosphate. In terms of biological role, catalyzes the attachment of alanine to tRNA(Ala) in a two-step reaction: alanine is first activated by ATP to form Ala-AMP and then transferred to the acceptor end of tRNA(Ala). Also edits incorrectly charged Ser-tRNA(Ala) and Gly-tRNA(Ala) via its editing domain. The polypeptide is Alanine--tRNA ligase (Caldivirga maquilingensis (strain ATCC 700844 / DSM 13496 / JCM 10307 / IC-167)).